We begin with the raw amino-acid sequence, 179 residues long: Large ribosomal subunit protein uL6 (179 aa).

Positions 151 to 179 are disordered; it reads RKPEPYKGKGIKYDNEQIRRKAGKSGGKK. The segment covering 152–169 has biased composition (basic and acidic residues); the sequence is KPEPYKGKGIKYDNEQIR. The span at 170-179 shows a compositional bias: basic residues; the sequence is RKAGKSGGKK.

Belongs to the universal ribosomal protein uL6 family. In terms of assembly, part of the 50S ribosomal subunit.

Functionally, this protein binds to the 23S rRNA, and is important in its secondary structure. It is located near the subunit interface in the base of the L7/L12 stalk, and near the tRNA binding site of the peptidyltransferase center. This chain is Large ribosomal subunit protein uL6, found in Nitratidesulfovibrio vulgaris (strain ATCC 29579 / DSM 644 / CCUG 34227 / NCIMB 8303 / VKM B-1760 / Hildenborough) (Desulfovibrio vulgaris).